A 170-amino-acid polypeptide reads, in one-letter code: Flavodoxin (170 aa).

Residues 5 to 165 form the Flavodoxin-like domain; it reads IGLFYGTQTG…RIKSWVAQLK (161 aa).

Belongs to the flavodoxin family. Requires FMN as cofactor.

In terms of biological role, low-potential electron donor to a number of redox enzymes. This chain is Flavodoxin (isiB), found in Nostoc sp. (strain PCC 7120 / SAG 25.82 / UTEX 2576).